The following is a 518-amino-acid chain: GMP synthase [glutamine-hydrolyzing] (518 aa).

A Glutamine amidotransferase type-1 domain is found at 8 to 201 (TVLIIDFGSQ…VLKISNLKGN (194 aa)). Cys-85 serves as the catalytic Nucleophile. Active-site residues include His-175 and Glu-177. The GMPS ATP-PPase domain occupies 202 to 393 (WSMASYREQT…LGLPEQFIGR (192 aa)). Residue 229-235 (SGGVDSS) participates in ATP binding.

Homodimer.

It catalyses the reaction XMP + L-glutamine + ATP + H2O = GMP + L-glutamate + AMP + diphosphate + 2 H(+). It participates in purine metabolism; GMP biosynthesis; GMP from XMP (L-Gln route): step 1/1. Catalyzes the synthesis of GMP from XMP. In Bartonella henselae (strain ATCC 49882 / DSM 28221 / CCUG 30454 / Houston 1) (Rochalimaea henselae), this protein is GMP synthase [glutamine-hydrolyzing].